The sequence spans 1614 residues: Chitin synthase csmA (1614 aa).

The disordered stretch occupies residues 1 to 22 (MAGPAPSGRTPSHAQSSLPSLP). The Myosin motor domain occupies 1-788 (MAGPAPSGRT…CWADLAKLGE (788 aa)). The span at 9-19 (RTPSHAQSSLP) shows a compositional bias: polar residues. 105 to 112 (GESGSGKT) lines the ATP pocket. The segment at 600–650 (QVSSKPMRMPSMARRKAGPSRLAFDAPEGDDQDEYDSQAGSMSKSSARRKS) is disordered. The segment covering 626–635 (PEGDDQDEYD) has biased composition (acidic residues). Residues 668–692 (LDIVSKCLNSANLNPYFVFCLKPND) form an actin-binding region. Helical transmembrane passes span 898-918 (WMAI…KTFG) and 937-957 (LIIW…PGLI). The Cytochrome b5 heme-binding domain occupies 961 to 1020 (QHVYSTAELSSHNGKDGHNSFVAIRGIVFNLDKFMPSHYPDIVPEKSLKKYAGTDATGLF). 2 N-linked (GlcNAc...) asparagine glycosylation sites follow: Asn1047 and Asn1072. The helical transmembrane segment at 1209–1229 (FILAISIFICLIVVFKFLAAL) threads the bilayer. N-linked (GlcNAc...) asparagine glycosylation is present at Asn1572.

In the N-terminal section; belongs to the TRAFAC class myosin-kinesin ATPase superfamily. Myosin family. The protein in the C-terminal section; belongs to the chitin synthase family. Class V subfamily.

It localises to the cell membrane. The protein resides in the cell septum. It is found in the cell tip. It catalyses the reaction [(1-&gt;4)-N-acetyl-beta-D-glucosaminyl](n) + UDP-N-acetyl-alpha-D-glucosamine = [(1-&gt;4)-N-acetyl-beta-D-glucosaminyl](n+1) + UDP + H(+). Functionally, polymerizes chitin, a structural polymer of the cell wall and septum, by transferring the sugar moiety of UDP-GlcNAc to the non-reducing end of the growing chitin polymer. Acts as the major chitin synthase in Aspergillus niger involved in cell wall integrity which is principally responsible for chitin synthesis at the lateral cell wall. Plays an important role in septal growth or maintenance. Mediates colony spore formation. This chain is Chitin synthase csmA, found in Aspergillus niger (strain ATCC MYA-4892 / CBS 513.88 / FGSC A1513).